Consider the following 222-residue polypeptide: Apoptosis regulator OPG045 (222 aa).

This sequence belongs to the orthopoxvirus OPG045 family. Homodimer. Interacts with host pro-apoptotic protein BCL2L11 (via BH3 domain). Interacts with host NLRP1. Interacts with host BAK.

The protein resides in the host mitochondrion outer membrane. It is found in the host cytoplasm. Functionally, plays a role in evading host innate immune response by inhibiting host inflammasome activation. Interacts with and inhibits NLR-mediated interleukin-1 beta/IL1B production in infected cells. At the host mitochondria outer membrane, interacts with the BH3 domain of host BAK and prevents BAK from binding active BAX. In turn, host apoptosis is inhibited. This chain is Apoptosis regulator OPG045 (OPG045), found in Homo sapiens (Human).